The following is a 407-amino-acid chain: WEB family protein At3g51720 (407 aa).

Coiled-coil stretches lie at residues 72-99 (KVLK…DKEN), 128-217 (SVGL…ARAA), and 247-278 (EEIL…EAEE).

This sequence belongs to the WEB family.

This chain is WEB family protein At3g51720, found in Arabidopsis thaliana (Mouse-ear cress).